We begin with the raw amino-acid sequence, 267 residues long: Phosphatidylglycerol--prolipoprotein diacylglyceryl transferase (267 aa).

Transmembrane regions (helical) follow at residues 17-37 (LNIRWYGLMYILGFVAAWLLA), 56-76 (LVTYSVFGVILGGRLGYTLFY), 91-111 (IWNGGMSFHGGLLGVIIAIWL), 120-140 (LFEVGDFTAPLVAPGLLAGRL), 173-193 (QLYEAALEGVALFIILWLFSA), 199-219 (MAVSGMFLLLYGSFRFFVEFF), and 236-256 (MGQILCLPMILGGLVLVGFAM). Residue R139 coordinates a 1,2-diacyl-sn-glycero-3-phospho-(1'-sn-glycerol).

This sequence belongs to the Lgt family.

The protein localises to the cell inner membrane. The enzyme catalyses L-cysteinyl-[prolipoprotein] + a 1,2-diacyl-sn-glycero-3-phospho-(1'-sn-glycerol) = an S-1,2-diacyl-sn-glyceryl-L-cysteinyl-[prolipoprotein] + sn-glycerol 1-phosphate + H(+). It functions in the pathway protein modification; lipoprotein biosynthesis (diacylglyceryl transfer). In terms of biological role, catalyzes the transfer of the diacylglyceryl group from phosphatidylglycerol to the sulfhydryl group of the N-terminal cysteine of a prolipoprotein, the first step in the formation of mature lipoproteins. The chain is Phosphatidylglycerol--prolipoprotein diacylglyceryl transferase from Oleidesulfovibrio alaskensis (strain ATCC BAA-1058 / DSM 17464 / G20) (Desulfovibrio alaskensis).